The primary structure comprises 332 residues: 2-oxoglutarate-dependent dioxygenase FG08081 (332 aa).

Residues 176–280 enclose the Fe2OG dioxygenase domain; sequence RSKSTLYFLH…RYSISYFLRA (105 aa). His-201, Asp-203, and His-258 together coordinate Fe cation. Arg-271 is a 2-oxoglutarate binding site.

It belongs to the iron/ascorbate-dependent oxidoreductase family. Fe(2+) is required as a cofactor.

It functions in the pathway mycotoxin biosynthesis. Functionally, 2-oxoglutarate-dependent dioxygenase; part of the gene cluster that mediates the biosynthesis of butenolide, a mycotoxin that shows antibiotic activity but does not seem to play a major role in the spread of head blight in wheat. Butenolide is derived from glutamic acid via a 4-acetamido-2-butenoic acid intermediate. The predicted function of the NADH:flavin oxidoreductase FG08077, the cytochrome P450 monooxygenase FG08079, the decarboxylase FG08083, and the putative acetyltransferase FG08082 are consistent with this pathway, however, the respective activities of the butelonide biosynthesis cluster enzymes have still to be experimentally determined. This Gibberella zeae (strain ATCC MYA-4620 / CBS 123657 / FGSC 9075 / NRRL 31084 / PH-1) (Wheat head blight fungus) protein is 2-oxoglutarate-dependent dioxygenase FG08081.